Here is a 492-residue protein sequence, read N- to C-terminus: Probable glycine dehydrogenase (decarboxylating) subunit 2 (492 aa).

The residue at position 274 (lysine 274) is an N6-(pyridoxal phosphate)lysine.

This sequence belongs to the GcvP family. C-terminal subunit subfamily. In terms of assembly, the glycine cleavage system is composed of four proteins: P, T, L and H. In this organism, the P 'protein' is a heterodimer of two subunits. Pyridoxal 5'-phosphate is required as a cofactor.

It catalyses the reaction N(6)-[(R)-lipoyl]-L-lysyl-[glycine-cleavage complex H protein] + glycine + H(+) = N(6)-[(R)-S(8)-aminomethyldihydrolipoyl]-L-lysyl-[glycine-cleavage complex H protein] + CO2. Its function is as follows. The glycine cleavage system catalyzes the degradation of glycine. The P protein binds the alpha-amino group of glycine through its pyridoxal phosphate cofactor; CO(2) is released and the remaining methylamine moiety is then transferred to the lipoamide cofactor of the H protein. This chain is Probable glycine dehydrogenase (decarboxylating) subunit 2, found in Exiguobacterium sibiricum (strain DSM 17290 / CCUG 55495 / CIP 109462 / JCM 13490 / 255-15).